The sequence spans 266 residues: Ribosomal RNA small subunit methyltransferase A (266 aa).

S-adenosyl-L-methionine-binding residues include asparagine 11, leucine 13, glycine 37, glutamate 57, aspartate 85, and asparagine 104.

This sequence belongs to the class I-like SAM-binding methyltransferase superfamily. rRNA adenine N(6)-methyltransferase family. RsmA subfamily.

It localises to the cytoplasm. The enzyme catalyses adenosine(1518)/adenosine(1519) in 16S rRNA + 4 S-adenosyl-L-methionine = N(6)-dimethyladenosine(1518)/N(6)-dimethyladenosine(1519) in 16S rRNA + 4 S-adenosyl-L-homocysteine + 4 H(+). Specifically dimethylates two adjacent adenosines (A1518 and A1519) in the loop of a conserved hairpin near the 3'-end of 16S rRNA in the 30S particle. May play a critical role in biogenesis of 30S subunits. The sequence is that of Ribosomal RNA small subunit methyltransferase A from Campylobacter jejuni (strain RM1221).